Here is a 154-residue protein sequence, read N- to C-terminus: MAFISTPLGKVTVKSATVSANRRGLRMQSDSEPVVSRRALLSGALAAAVAAALARARPAQARIDYEGIGYLGGGDKIDVNNANVRAYRKFPGLYPTAAKKIVQGGPYGTPDDILKNPELSERDKEVIKKYMDRFVALPPTPEYFTDRVNNGIYK.

A chloroplast-targeting transit peptide spans methionine 1–serine 36. Residues arginine 37 to alanine 61 constitute a thylakoid transit peptide.

The protein belongs to the PsbU family. In terms of assembly, PSII is composed of 1 copy each of membrane proteins PsbA, PsbB, PsbC, PsbD, PsbE, PsbF, PsbH, PsbI, PsbJ, PsbK, PsbL, PsbM, PsbT, PsbY, PsbZ, Psb30/Ycf12, at least 3 peripheral proteins of the oxygen-evolving complex and a large number of cofactors. It forms dimeric complexes. The extrinsic subunits in red algae are PsbO (OEC33), PsbQ', cytochrome c-550 and PsbU. In terms of processing, predicted to be translocated into the thylakoid lumen by the Tat system. The position of the first transit peptide cleavage has not been experimentally proven.

It localises to the plastid. Its subcellular location is the chloroplast thylakoid membrane. In terms of biological role, one of the extrinsic, lumenal subunits of photosystem II (PSII). PSII is a light-driven water plastoquinone oxidoreductase, using light energy to abstract electrons from H(2)O, generating a proton gradient subsequently used for ATP formation. The extrinsic proteins stabilize the structure of photosystem II oxygen-evolving complex (OEC), the ion environment of oxygen evolution and protect the OEC against heat-induced inactivation. The sequence is that of Photosystem II extrinsic protein U, chloroplastic from Cyanidium caldarium (Red alga).